The primary structure comprises 363 residues: Two-pore potassium channel 1 (363 aa).

The tract at residues 1-61 (MSSDAARTPL…DDVKIDEPPP (61 aa)) is disordered. Topologically, residues 1–78 (MSSDAARTPL…FSDLNPNLRR (78 aa)) are cytoplasmic. Basic residues predominate over residues 31–42 (SSRKRRLRRSRS). Residues 79–99 (VIMFLALYLTIGTLCFYLVRD) traverse the membrane as a helical segment. An intramembrane region (pore-forming) is located at residues 111-130 (DALYFCIVTMTTVGYGDLVP). The helical transmembrane segment at 137–157 (LLACAFVFSGMVLVGHLLSRA) threads the bilayer. At 158-197 (ADYLVEKQEALLVRAFHLRQSFGPTDILKELHTNKLRYKC) the chain is on the cytoplasmic side. Residues 198–218 (YATCLVLVVLFIVGTIFLVMV) form a helical membrane-spanning segment. Positions 225–244 (SAFYCVCSTVTTLGYGDKSF) form an intramembrane region, pore-forming. A helical membrane pass occupies residues 251 to 271 (LFAVFWILTSSICLAQFFLYV). Residues 272 to 363 (AELNTENKQR…LAQTTSQIQR (92 aa)) lie on the Cytoplasmic side of the membrane. 2 consecutive EF-hand domains span residues 288 to 323 (LTRR…EMGK) and 327 to 362 (KDIS…SQIQ). The Endoplasmic reticulum release signal motif lies at 296–298 (DLE). Positions 301, 303, 305, 312, 340, 342, 344, 346, and 351 each coordinate Ca(2+).

The protein belongs to the two pore domain potassium channel (TC 1.A.1.7) family. Homodimer. Interacts with GRF1 and GRF6, but only GRF6 modulates the channel activity. In terms of processing, phosphorylation at Ser-42 increases and stabilizes the interaction with 14-3-3 proteins. As to expression, detected in mesophyll cells, guard cells and vascular tissues of the leaves. Expressed in the hilum, where the funiculus is attached during fruit maturation and in the embryo. Also expressed at a lower level in seedlings, root tips and elongation zones, and flowers. Could be detected in mitotically active tissues.

Its subcellular location is the vacuole membrane. Its activity is regulated as follows. Could be activated by protein kinase C. Strongly induced by calcium. Blocked by barium, tetraethylammonium (TEA), quinine and quinidine. Its function is as follows. Voltage-independent, large conductance and potassium-selective tonoplast ion channel. Regulated by cytoplasmic calcium and pH. Does not mediate slow-vacuolar (SV) ionic currents, but essential to establish VK currents. Has some permeability for Rb(+) and NH(4)(+), but none for Na(+), Cs(+) or Li(+). Involved in intracellular K(+) redistribution and/or K(+) retranslocation between different tissues. The polypeptide is Two-pore potassium channel 1 (TPK1) (Arabidopsis thaliana (Mouse-ear cress)).